The sequence spans 451 residues: Putative metabolite transport protein YyaJ (451 aa).

Topologically, residues 1-29 are cytoplasmic; the sequence is MNTIFKQKNTHPFSNAANRLDRLPISRVH. The helical transmembrane segment at 30–50 threads the bilayer; that stretch reads FQVLTALGIVYFFDLADLFTL. Residues 51–60 lie on the Extracellular side of the membrane; sequence SNVAPALIEH. Residues 61 to 81 traverse the membrane as a helical segment; it reads WGIPLSTIANVTAASFLGMFL. The Cytoplasmic portion of the chain corresponds to 82–97; the sequence is GASLGGRLSDRIGRKK. Residues 98–118 form a helical membrane-spanning segment; it reads ALNLFVFVFSIASLCNAAAWD. The Extracellular portion of the chain corresponds to 119-124; the sequence is IPSLMT. The helical transmembrane segment at 125 to 145 threads the bilayer; the sequence is FRFLTGFGVAAAMVITNSYLA. At 146–157 the chain is on the cytoplasmic side; it reads EFFPSSVRGKYI. A helical transmembrane segment spans residues 158–178; that stretch reads SFCAMIGLIGVPITNIVSAFV. The Extracellular segment spans residues 179 to 182; it reads IPLG. A helical transmembrane segment spans residues 183-203; sequence SWGWRLVFVWGAVGLIYFFFI. At 204 to 270 the chain is on the cytoplasmic side; it reads HRLEESPRWH…LLKGRNLKIT (67 aa). Residues 271 to 291 traverse the membrane as a helical segment; it reads IVLSAVWIFETFGFYGFASWV. Residues 292 to 305 lie on the Extracellular side of the membrane; the sequence is PSLLKSNGVTMENT. A helical transmembrane segment spans residues 306-326; the sequence is LWYNVLHSVGAPLGALLGSMI. The Cytoplasmic portion of the chain corresponds to 327–333; that stretch reads SERFQRK. A helical membrane pass occupies residues 334–354; that stretch reads WILAASAFLTAIAGLLYGMTF. The Extracellular portion of the chain corresponds to 355–357; that stretch reads IPI. The helical transmembrane segment at 358–378 threads the bilayer; that stretch reads MIIVFGFIVNITERVFTSNLY. The Cytoplasmic portion of the chain corresponds to 379–396; it reads AYTSEPYPTEYRSSGSGL. The helical transmembrane segment at 397–417 threads the bilayer; that stretch reads AYGLGRFSNIFGSLLVGFIAV. At 418-421 the chain is on the extracellular side; the sequence is QLGY. The helical transmembrane segment at 422 to 442 threads the bilayer; sequence ISVFLFIGGCWLACSLLLIFF. The Cytoplasmic segment spans residues 443–451; the sequence is GPNTNAKQI.

This sequence belongs to the major facilitator superfamily. Sugar transporter (TC 2.A.1.1) family.

The protein localises to the cell membrane. This is Putative metabolite transport protein YyaJ (yyaJ) from Bacillus subtilis (strain 168).